A 609-amino-acid chain; its full sequence is DNA polymerase alpha subunit B (609 aa).

S155 is modified (phosphoserine). Phosphothreonine is present on T164. 2 positions are modified to phosphoserine: S166 and S168.

Belongs to the DNA polymerase alpha subunit B family. In terms of assembly, component of the alpha DNA polymerase complex (also known as the alpha DNA polymerase-primase complex) consisting of four subunits: the catalytic subunit PolA1, the regulatory subunit PolA2, and the primase complex subunits Prim1 and Prim2 respectively. PolA1 associates with the DNA primase complex before association with PolA2. Post-translationally, phosphorylated in embryos until cycle 13. Expressed in embryos (at protein level).

The protein resides in the nucleus. Its function is as follows. Accessory subunit of the DNA polymerase alpha complex (also known as the alpha DNA polymerase-primase complex) which plays an essential role in the initiation of DNA synthesis. During the S phase of the cell cycle, the DNA polymerase alpha complex (composed of a catalytic subunit PolA1, an accessory subunit PolA2 and two primase subunits, the catalytic subunit Prim1 and the regulatory subunit Prim2) is recruited to DNA at the replicative forks. The primase subunit of the polymerase alpha complex initiates DNA synthesis by oligomerising short RNA primers on both leading and lagging strands. These primers are initially extended by the polymerase alpha catalytic subunit and subsequently transferred to polymerase delta and polymerase epsilon for processive synthesis on the lagging and leading strand, respectively. This Drosophila melanogaster (Fruit fly) protein is DNA polymerase alpha subunit B.